The sequence spans 398 residues: Elongation factor Tu (398 aa).

Residues 10–207 (KPHVNIGTIG…TVDEYIPEPE (198 aa)) form the tr-type G domain. The G1 stretch occupies residues 19–26 (GHVDHGKT). 19-26 (GHVDHGKT) is a GTP binding site. T26 serves as a coordination point for Mg(2+). Residues 63–67 (GITIN) form a G2 region. The segment at 84–87 (DAPG) is G3. Residues 84–88 (DAPGH) and 139–142 (NKVD) each bind GTP. Residues 139 to 142 (NKVD) are G4. The segment at 177 to 179 (SAL) is G5.

It belongs to the TRAFAC class translation factor GTPase superfamily. Classic translation factor GTPase family. EF-Tu/EF-1A subfamily. As to quaternary structure, monomer.

Its subcellular location is the cytoplasm. It carries out the reaction GTP + H2O = GDP + phosphate + H(+). In terms of biological role, GTP hydrolase that promotes the GTP-dependent binding of aminoacyl-tRNA to the A-site of ribosomes during protein biosynthesis. This is Elongation factor Tu from Streptococcus pyogenes serotype M49 (strain NZ131).